The following is a 373-amino-acid chain: Putative glutamate--cysteine ligase 2-1 (373 aa).

Belongs to the glutamate--cysteine ligase type 2 family. YbdK subfamily.

It catalyses the reaction L-cysteine + L-glutamate + ATP = gamma-L-glutamyl-L-cysteine + ADP + phosphate + H(+). ATP-dependent carboxylate-amine ligase which exhibits weak glutamate--cysteine ligase activity. This Legionella pneumophila (strain Lens) protein is Putative glutamate--cysteine ligase 2-1.